A 144-amino-acid polypeptide reads, in one-letter code: Large ribosomal subunit protein uL15 (144 aa).

The segment at 1–53 (MRLNTLSPAEGAKHAPKRLGRGIGSGLGKTGGRGHKGQKSRSGGGVRRGFEGG) is disordered. Residues 21–31 (RGIGSGLGKTG) show a composition bias toward gly residues.

This sequence belongs to the universal ribosomal protein uL15 family. In terms of assembly, part of the 50S ribosomal subunit.

In terms of biological role, binds to the 23S rRNA. The polypeptide is Large ribosomal subunit protein uL15 (Pectobacterium carotovorum subsp. carotovorum (strain PC1)).